The following is a 164-amino-acid chain: NADH-quinone oxidoreductase subunit I (164 aa).

4Fe-4S ferredoxin-type domains lie at 55 to 85 (LRRY…IDAE) and 95 to 124 (TRYD…EGPN). The [4Fe-4S] cluster site is built by cysteine 65, cysteine 68, cysteine 71, cysteine 75, cysteine 104, cysteine 107, cysteine 110, and cysteine 114.

It belongs to the complex I 23 kDa subunit family. As to quaternary structure, NDH-1 is composed of 14 different subunits. Subunits NuoA, H, J, K, L, M, N constitute the membrane sector of the complex. It depends on [4Fe-4S] cluster as a cofactor.

The protein localises to the cell inner membrane. It catalyses the reaction a quinone + NADH + 5 H(+)(in) = a quinol + NAD(+) + 4 H(+)(out). In terms of biological role, NDH-1 shuttles electrons from NADH, via FMN and iron-sulfur (Fe-S) centers, to quinones in the respiratory chain. The immediate electron acceptor for the enzyme in this species is believed to be ubiquinone. Couples the redox reaction to proton translocation (for every two electrons transferred, four hydrogen ions are translocated across the cytoplasmic membrane), and thus conserves the redox energy in a proton gradient. This Jannaschia sp. (strain CCS1) protein is NADH-quinone oxidoreductase subunit I.